A 252-amino-acid chain; its full sequence is Hydroxyacylglutathione hydrolase (252 aa).

7 residues coordinate Zn(2+): His-54, His-56, Asp-58, His-59, His-111, Asp-130, and His-170.

Belongs to the metallo-beta-lactamase superfamily. Glyoxalase II family. Monomer. Zn(2+) serves as cofactor.

The catalysed reaction is an S-(2-hydroxyacyl)glutathione + H2O = a 2-hydroxy carboxylate + glutathione + H(+). It participates in secondary metabolite metabolism; methylglyoxal degradation; (R)-lactate from methylglyoxal: step 2/2. Functionally, thiolesterase that catalyzes the hydrolysis of S-D-lactoyl-glutathione to form glutathione and D-lactic acid. This chain is Hydroxyacylglutathione hydrolase, found in Francisella tularensis subsp. holarctica (strain FTNF002-00 / FTA).